Here is a 396-residue protein sequence, read N- to C-terminus: S-adenosylmethionine synthase (396 aa).

H16 serves as a coordination point for ATP. A Mg(2+)-binding site is contributed by D18. E44 serves as a coordination point for K(+). L-methionine contacts are provided by E57 and Q100. A flexible loop region spans residues 100–110; that stretch reads QSVDINQGVDR. Residues 165–167, 231–232, D240, 246–247, A263, and K267 contribute to the ATP site; these read DAK, KF, and RK. D240 is a binding site for L-methionine. K271 contacts L-methionine.

Belongs to the AdoMet synthase family. In terms of assembly, homotetramer; dimer of dimers. Mg(2+) is required as a cofactor. K(+) serves as cofactor.

It is found in the cytoplasm. It catalyses the reaction L-methionine + ATP + H2O = S-adenosyl-L-methionine + phosphate + diphosphate. The protein operates within amino-acid biosynthesis; S-adenosyl-L-methionine biosynthesis; S-adenosyl-L-methionine from L-methionine: step 1/1. Catalyzes the formation of S-adenosylmethionine (AdoMet) from methionine and ATP. The overall synthetic reaction is composed of two sequential steps, AdoMet formation and the subsequent tripolyphosphate hydrolysis which occurs prior to release of AdoMet from the enzyme. This chain is S-adenosylmethionine synthase, found in Azotobacter vinelandii (strain DJ / ATCC BAA-1303).